Reading from the N-terminus, the 1162-residue chain is ATP-dependent helicase/deoxyribonuclease subunit B (1162 aa).

The 275-residue stretch at 1–275 (MELNAYIGRA…QFFKQQYRFN (275 aa)) folds into the UvrD-like helicase ATP-binding domain. 8–15 (GRAGTGKS) is an ATP binding site. The UvrD-like helicase C-terminal domain occupies 269–583 (KQQYRFNNKD…SIGTMDLAKV (315 aa)). Residues Cys-784, Cys-1117, Cys-1120, and Cys-1126 each coordinate [4Fe-4S] cluster.

The protein belongs to the helicase family. AddB/RexB type 1 subfamily. As to quaternary structure, heterodimer of AddA and AddB. Requires Mg(2+) as cofactor. The cofactor is [4Fe-4S] cluster.

In terms of biological role, the heterodimer acts as both an ATP-dependent DNA helicase and an ATP-dependent, dual-direction single-stranded exonuclease. Recognizes the chi site generating a DNA molecule suitable for the initiation of homologous recombination. The AddB subunit has 5' -&gt; 3' nuclease activity but not helicase activity. The sequence is that of ATP-dependent helicase/deoxyribonuclease subunit B from Staphylococcus haemolyticus (strain JCSC1435).